Consider the following 279-residue polypeptide: Diaminopimelate epimerase (279 aa).

Residues Asn-13 and Asn-66 each coordinate substrate. Cys-75 functions as the Proton donor in the catalytic mechanism. Substrate is bound by residues Gly-76–Asn-77, Asn-164, Asn-197, and Glu-215–Arg-216. The active-site Proton acceptor is the Cys-224. Position 225–226 (Gly-225–Thr-226) interacts with substrate.

It belongs to the diaminopimelate epimerase family. Homodimer.

The protein localises to the cytoplasm. The catalysed reaction is (2S,6S)-2,6-diaminopimelate = meso-2,6-diaminopimelate. It participates in amino-acid biosynthesis; L-lysine biosynthesis via DAP pathway; DL-2,6-diaminopimelate from LL-2,6-diaminopimelate: step 1/1. In terms of biological role, catalyzes the stereoinversion of LL-2,6-diaminopimelate (L,L-DAP) to meso-diaminopimelate (meso-DAP), a precursor of L-lysine and an essential component of the bacterial peptidoglycan. The protein is Diaminopimelate epimerase of Brachyspira hyodysenteriae (strain ATCC 49526 / WA1).